The following is a 492-amino-acid chain: Monocarboxylate transporter 3 (492 aa).

Topologically, residues 1–14 (MGAGGPRRGAGPPD) are cytoplasmic. Residues 15–35 (GGWGWVVLGACFVVTGFAYGF) traverse the membrane as a helical segment. Topologically, residues 36 to 58 (PKAVSVFFRELKRDFGAGYSDTA) are extracellular. Residues 59 to 79 (WVSSIMLAMLYGTGPLSSILV) traverse the membrane as a helical segment. At 80-85 (TRFGCR) the chain is on the cytoplasmic side. A helical membrane pass occupies residues 86–106 (PVMLAGGLLASAGMILASFAS). Over 107–115 (RLVELYLTA) the chain is Extracellular. A helical transmembrane segment spans residues 116-136 (GVLTGLGLALNFQPSLIMLGL). At 137–146 (YFERRRPLAN) the chain is on the cytoplasmic side. The chain crosses the membrane as a helical span at residues 147–167 (GLAAAGSPVFLSMLSPLGQLL). Residues 168-172 (GERFG) are Extracellular-facing. The chain crosses the membrane as a helical span at residues 173-193 (WRGGFLLFGGLLLHCCACGAV). At 194 to 228 (MRPPPGPPPRRDPSPHGGPARRRRLLDVAVCTDRA) the chain is on the cytoplasmic side. A helical membrane pass occupies residues 229–249 (FVVYVVTKFLMALGLFVPAIL). Residues 250–257 (LVNYAKDA) lie on the Extracellular side of the membrane. Residues 258-278 (GVPDAEAAFLLSIVGFVDIVA) traverse the membrane as a helical segment. The Cytoplasmic segment spans residues 279–293 (RPACGALAGLGRLRP). The chain crosses the membrane as a helical span at residues 294–314 (HVPYLFSLALLANGLTDLISA). Topologically, residues 315–318 (RARS) are extracellular. Residues 319 to 339 (YGTLVAFCIAFGLSYGMVGAL) traverse the membrane as a helical segment. Residues 340–352 (QFEVLMATVGAPR) lie on the Cytoplasmic side of the membrane. Residues 353 to 373 (FPSALGLVLLVEAVAVLIGPP) form a helical membrane-spanning segment. Topologically, residues 374 to 386 (SAGRLVDALKNYE) are extracellular. The helical transmembrane segment at 387-407 (IIFYLAGSEVALAGVFMAVTT) threads the bilayer. Residues 408 to 492 (YCCLRCSKNI…GGHEARGQKA (85 aa)) are Cytoplasmic-facing. The tract at residues 419–492 (SGRSAEGGAS…GGHEARGQKA (74 aa)) is disordered. 2 basolateral sorting signal regions span residues 426–460 (GASD…VLSP) and 461–482 (RAGS…HESI). Positions 476–492 (ELDHESIGGHEARGQKA) are enriched in basic and acidic residues.

Belongs to the major facilitator superfamily. Monocarboxylate porter (TC 2.A.1.13) family. As to expression, expressed exclusively in retinal pigment epithelium and choroid plexus epithelium.

The protein resides in the basolateral cell membrane. The catalysed reaction is (S)-lactate(in) + H(+)(in) = (S)-lactate(out) + H(+)(out). Functionally, probable retinal pigment epithelium (RPE)-specific proton-coupled L-lactate transporter. May facilitate transport of lactate and H(+) out of the retina and could therefore play an essential role in maintenance of metabolic and ionic homeostasis of the outer retina. The protein is Monocarboxylate transporter 3 (Slc16a8) of Mus musculus (Mouse).